The following is a 209-amino-acid chain: Ion-translocating oxidoreductase complex subunit G (209 aa).

The Cytoplasmic portion of the chain corresponds to Met1–Asn8. A helical transmembrane segment spans residues Gly9–Leu29. Residues Thr30–Gln209 are Periplasmic-facing. Thr175 carries the post-translational modification FMN phosphoryl threonine.

It belongs to the RnfG family. As to quaternary structure, the complex is composed of six subunits: RnfA, RnfB, RnfC, RnfD, RnfE and RnfG. The cofactor is FMN.

It is found in the cell inner membrane. In terms of biological role, part of a membrane-bound complex that couples electron transfer with translocation of ions across the membrane. The protein is Ion-translocating oxidoreductase complex subunit G of Vibrio cholerae serotype O1 (strain ATCC 39541 / Classical Ogawa 395 / O395).